We begin with the raw amino-acid sequence, 721 residues long: Protein mu-NS (721 aa).

The tract at residues 1-13 (MASFKGFSANTVP) is interaction with sigma-NS. The segment at 1 to 38 (MASFKGFSANTVPVSKTRKDTSSLTATPGLRAPSMSSP) is RNA-binding. The interval 14–40 (VSKTRKDTSSLTATPGLRAPSMSSPVD) is interaction with mu-2. The disordered stretch occupies residues 17 to 37 (TRKDTSSLTATPGLRAPSMSS). The involved in the formation of factory-like inclusions stretch occupies residues 471 to 721 (QSDTVDGIKL…IDFSVPADEL (251 aa)). 2 coiled-coil regions span residues 523 to 556 (LLSQ…ADVK) and 632 to 686 (KQAH…NQRQ).

It belongs to the orthoreovirus mu-NS protein family. Interacts with mu-2. Interacts with sigma-NS; in viral factories. Interacts with the inner capsid proteins lambda-1 and sigma-2, and outer capsid protein lambda-2; in viral factories. Post-translationally, the N-terminus is blocked.

The protein localises to the host cytoplasm. Its function is as follows. Non-structural protein implicated with protein sigma-NS in forming the matrix of viral factories, which are large inclusions in the host cytoplasm where replication intermediates are assembled and viral RNA replication takes place. Together with mu-2, recruits the other core proteins to these factories. The polypeptide is Protein mu-NS (M3) (Mammalia (T2J)).